The following is a 166-amino-acid chain: Regulatory protein RecX (166 aa).

This sequence belongs to the RecX family.

Its subcellular location is the cytoplasm. Its function is as follows. Modulates RecA activity. This chain is Regulatory protein RecX, found in Salmonella arizonae (strain ATCC BAA-731 / CDC346-86 / RSK2980).